The following is a 368-amino-acid chain: Nuclease EXOG, mitochondrial (368 aa).

The N-terminal 41 residues, 1 to 41 (MAIKSIASRLRGSRRFLSGFVAGAVVGAAGAGLAALQFFRS), are a transit peptide targeting the mitochondrion. His-140 (proton acceptor) is an active-site residue. Asn-171 lines the a divalent metal cation pocket.

It belongs to the DNA/RNA non-specific endonuclease family. In terms of assembly, homodimer. It depends on a divalent metal cation as a cofactor. In terms of tissue distribution, ubiquitous.

Its subcellular location is the mitochondrion inner membrane. Its function is as follows. Endo/exonuclease with nicking activity towards supercoiled DNA, a preference for single-stranded DNA and 5'-3' exonuclease activity. This is Nuclease EXOG, mitochondrial (EXOG) from Homo sapiens (Human).